The following is a 254-amino-acid chain: Imidazole glycerol phosphate synthase subunit HisF (254 aa).

Residues Asp-14 and Asp-133 contribute to the active site.

The protein belongs to the HisA/HisF family. Heterodimer of HisH and HisF.

It is found in the cytoplasm. The catalysed reaction is 5-[(5-phospho-1-deoxy-D-ribulos-1-ylimino)methylamino]-1-(5-phospho-beta-D-ribosyl)imidazole-4-carboxamide + L-glutamine = D-erythro-1-(imidazol-4-yl)glycerol 3-phosphate + 5-amino-1-(5-phospho-beta-D-ribosyl)imidazole-4-carboxamide + L-glutamate + H(+). Its pathway is amino-acid biosynthesis; L-histidine biosynthesis; L-histidine from 5-phospho-alpha-D-ribose 1-diphosphate: step 5/9. Functionally, IGPS catalyzes the conversion of PRFAR and glutamine to IGP, AICAR and glutamate. The HisF subunit catalyzes the cyclization activity that produces IGP and AICAR from PRFAR using the ammonia provided by the HisH subunit. The chain is Imidazole glycerol phosphate synthase subunit HisF from Nitratiruptor sp. (strain SB155-2).